The sequence spans 690 residues: Polyribonucleotide nucleotidyltransferase (690 aa).

Asp-483 and Asp-489 together coordinate Mg(2+). The KH domain maps to Pro-550–Ile-609. The S1 motif domain occupies Asn-619–Lys-686.

Belongs to the polyribonucleotide nucleotidyltransferase family. Requires Mg(2+) as cofactor.

It is found in the cytoplasm. It catalyses the reaction RNA(n+1) + phosphate = RNA(n) + a ribonucleoside 5'-diphosphate. Its function is as follows. Involved in mRNA degradation. Catalyzes the phosphorolysis of single-stranded polyribonucleotides processively in the 3'- to 5'-direction. The sequence is that of Polyribonucleotide nucleotidyltransferase from Pelagibacter ubique (strain HTCC1062).